A 96-amino-acid polypeptide reads, in one-letter code: MTELHQIVKRMLVTEKSTLEKDEKNKYYFEVDRRANKIEIRKAVERLLKVTVDDVHVINIKGKKKRTGRIIGKRRDWKKAVVTLAQGNTIDIYHGV.

Belongs to the universal ribosomal protein uL23 family. Part of the 50S ribosomal subunit. Contacts protein L29, and trigger factor when it is bound to the ribosome.

Functionally, one of the early assembly proteins it binds 23S rRNA. One of the proteins that surrounds the polypeptide exit tunnel on the outside of the ribosome. Forms the main docking site for trigger factor binding to the ribosome. The chain is Large ribosomal subunit protein uL23 from Syntrophus aciditrophicus (strain SB).